A 620-amino-acid chain; its full sequence is Guanylate-binding protein 3 (620 aa).

The segment at 1-304 is GTPase domain (Globular); sequence MEAPICLVEN…NAINSGTVPC (304 aa). The GB1/RHD3-type G domain maps to 29 to 271; sequence AQPLVVVAIV…FCSYIFTNGK (243 aa). Residues 39-46, 61-63, and 91-95 each bind GTP; these read GLYRTGKS, LGS, and DTEGL. Coiled-coil stretches lie at residues 375–411 and 477–582; these read KKLVVTIEERKEEFIRQNEAASIRHCQAELERLSESL and DGER…TRRK.

It belongs to the TRAFAC class dynamin-like GTPase superfamily. GB1/RHD3 GTPase family. GB1 subfamily. As to quaternary structure, heterodimer with other family members, including GBP1, GBP2 and GBP5. Dimerization regulates subcellular location. As to expression, brain, lung, heart, spleen, kidney, liver and intestine.

It is found in the cytoplasm. It localises to the perinuclear region. The protein localises to the golgi apparatus membrane. It catalyses the reaction GTP + H2O = GDP + phosphate + H(+). In terms of biological role, interferon (IFN)-inducible GTPase that plays important roles in innate immunity against a diverse range of bacterial, viral and protozoan pathogens. Hydrolyzes GTP very efficiently; GDP rather than GMP is the major reaction product. Following infection, recruited to the pathogen-containing vacuoles or vacuole-escaped bacteria and acts as a positive regulator of inflammasome assembly by promoting the release of inflammasome ligands from bacteria. Acts by promoting lysis of pathogen-containing vacuoles, releasing pathogens into the cytosol. Following pathogen release in the cytosol, promotes recruitment of proteins that mediate bacterial cytolysis, such as Gm12250/Irgb10: this liberates ligands that are detected by inflammasomes, such as lipopolysaccharide (LPS) that activates the non-canonical CASP4/CASP11 inflammasome or double-stranded DNA (dsDNA) that activates the AIM2 inflammasome. May play a role in erythroid differentiation. The chain is Guanylate-binding protein 3 from Mus musculus (Mouse).